Consider the following 96-residue polypeptide: Large ribosomal subunit protein uL23 (96 aa).

This sequence belongs to the universal ribosomal protein uL23 family. As to quaternary structure, part of the 50S ribosomal subunit. Contacts protein L29, and trigger factor when it is bound to the ribosome.

In terms of biological role, one of the early assembly proteins it binds 23S rRNA. One of the proteins that surrounds the polypeptide exit tunnel on the outside of the ribosome. Forms the main docking site for trigger factor binding to the ribosome. The chain is Large ribosomal subunit protein uL23 from Onion yellows phytoplasma (strain OY-M).